The primary structure comprises 101 residues: Citrinin resistance protein, mitochondrial (101 aa).

The protein localises to the mitochondrion. Mitochondrial protein that is involved in citrinin resistance. In Saccharomyces cerevisiae (strain ATCC 204508 / S288c) (Baker's yeast), this protein is Citrinin resistance protein, mitochondrial.